We begin with the raw amino-acid sequence, 481 residues long: Alpha-L-arabinofuranosidase 43 (481 aa).

The signal sequence occupies residues 1–19 (MRFSVFTAAIAAAFSACCA). Residues Asn-158, Asn-176, and Asn-365 are each glycosylated (N-linked (GlcNAc...) asparagine).

Belongs to the glycosyl hydrolase 43 family.

Its subcellular location is the secreted. The enzyme catalyses Hydrolysis of terminal non-reducing alpha-L-arabinofuranoside residues in alpha-L-arabinosides.. With respect to regulation, activity is significantly inhibited by SDS and partially inhibited by Ag(+), Fe(3+) and beta-mercaptoethanol. Its function is as follows. Alpha-L-arabinofuranosidase specific for the cleavage of alpha-1,3-linkage. Shows high activity against 4-nitrophenyl alpha-L-arabinofuranoside, debranched arabinan, and sugar beet arabinan. This chain is Alpha-L-arabinofuranosidase 43, found in Humicola insolens (Soft-rot fungus).